We begin with the raw amino-acid sequence, 506 residues long: CDK5 regulatory subunit-associated protein 3 (506 aa).

3 consecutive short sequence motifs (shuffled ATG8-binding motif) follow at residues 267 to 270, 292 to 295, and 310 to 313; these read IDWG. A required for interaction with UFL1 and mediates interaction with CHEK1 region spans residues 269–506; it reads WGDFGVEAVS…RPVNLMGTSL (238 aa). The tract at residues 355–370 is RPL10a-binding domain (RBD); it reads DELMELEIFLARRAVE. Residue Lys-450 forms a Glycyl lysine isopeptide (Lys-Gly) (interchain with G-Cter in SUMO2) linkage.

This sequence belongs to the CDK5RAP3 family. Substrate adapter component of the UFM1 ribosome E3 ligase (UREL) complex, composed of UFL1, DDRGK1 and CDK5RAP3. Interaction with UFL1 anchors CDK5RAP3 in the cytoplasm, preventing its translocation to the nucleus which allows expression of the CCND1 cyclin and progression of cells through the G1/S transition. Interacts with ATG8 family proteins MAP1LC3A, MAP1LC3B, GABARAP, GABARAPL1 and GABARAPL2. Interacts with CDK5R1; competes with CDK5RAP1 and CDK5RAP2. Interacts with RELA. Interacts with CHEK1; may negatively regulate CHEK1 and thereby stimulate entry into mitosis. Interacts with CDKN2A/ARF and MDM2; forms a ternary complex involved in regulation of p53/TP53. Interacts with MAPK14. Interacts with CCNB1. Interacts with TUBG1; may regulate CDK5RAP3 in mitotic G2/M transition checkpoint. In terms of processing, may be phosphorylated by CDK5. Post-translationally, ubiquitinated. Probably triggers proteasomal degradation and is negatively regulated by UFL1. May be ufmylated. In terms of processing, cleaved by caspases early during apoptosis, the resulting peptides may play a role in rupture of the nuclear envelope.

The protein localises to the endoplasmic reticulum membrane. The protein resides in the cytoplasm. It is found in the nucleus. Its subcellular location is the cytoskeleton. It localises to the microtubule organizing center. The protein localises to the centrosome. Its function is as follows. Substrate adapter of E3 ligase complexes mediating ufmylation, the covalent attachment of the ubiquitin-like modifier UFM1 to substrate proteins, and which is involved in various processes, such as ribosome recycling and reticulophagy (also called ER-phagy). As part of the UREL complex, plays a key role in ribosome recycling by promoting mono-ufmylation of RPL26/uL24 subunit of the 60S ribosome. Ufmylation of RPL26/uL24 occurs on free 60S ribosomes following ribosome dissociation: it weakens the junction between post-termination 60S subunits and SEC61 translocons, promoting release and recycling of the large ribosomal subunit from the endoplasmic reticulum membrane. Ufmylation of RPL26/uL24 and subsequent 60S ribosome recycling either take place after normal termination of translation or after ribosome stalling during cotranslational translocation at the endoplasmic reticulum. Within the UREL complex, CDK5RAP3 acts as a substrate adapter that constrains UFL1 ligase activity to mono-ufmylate RPL26/uL24 at 'Lys-134'. The UREL complex is also involved in reticulophagy in response to endoplasmic reticulum stress by promoting ufmylation of proteins such as CYB5R3, thereby promoting lysosomal degradation of ufmylated proteins. Also acts as a regulator of transcription: negatively regulates NF-kappa-B-mediated gene transcription through the control of RELA phosphorylation. Also regulates mitotic G2/M transition checkpoint and mitotic G2 DNA damage checkpoint. Through its interaction with CDKN2A/ARF and MDM2 may induce MDM2-dependent p53/TP53 ubiquitination, stabilization and activation in the nucleus, thereby promoting G1 cell cycle arrest and inhibition of cell proliferation. May also play a role in the rupture of the nuclear envelope during apoptosis. May regulate MAPK14 activity by regulating its dephosphorylation by PPM1D/WIP1. Required for liver development. This chain is CDK5 regulatory subunit-associated protein 3, found in Pongo abelii (Sumatran orangutan).